The primary structure comprises 380 residues: Zinc finger protein neuro-d4 (380 aa).

Residues 132–164 (ALLDCQKPPPGDFAHDAEGDEMEDDAPRRKNKA) form a disordered region. The segment at 190–213 (YVCDICGKRYKNRPGLSYHYTHTH) adopts a C2H2-type zinc-finger fold. PHD-type zinc fingers lie at residues 262–321 (EGPC…CKNC) and 318–368 (CKNC…CLRQ). The Zn(2+) site is built by Cys265, Cys268, Cys286, Cys289, His294, Cys297, Cys315, Cys318, Cys321, Cys324, Cys336, Cys339, His344, Cys347, Cys362, and Cys365.

This sequence belongs to the requiem/DPF family. Component of neuron-specific chromatin remodeling complex (nBAF complex), a subfamily of ATP-dependent SWI/SNF chromatin remodeling complexes.

The protein resides in the cytoplasm. The protein localises to the nucleus. Functionally, may have an important role in developing neurons by participating in regulation of cell survival, possibly as a neurospecific transcription factor. Belongs to the neuron-specific chromatin remodeling complex (nBAF complex) and plays a role in neural development. This is Zinc finger protein neuro-d4 from Gallus gallus (Chicken).